The chain runs to 161 residues: Large ribosomal subunit protein uL29c (161 aa).

The N-terminal 61 residues, 1–61 (MATMSLAAAS…ERRAAAMVAM (61 aa)), are a transit peptide targeting the chloroplast.

It belongs to the universal ribosomal protein uL29 family. In terms of assembly, part of the 50S ribosomal subunit.

It is found in the plastid. It localises to the chloroplast. The chain is Large ribosomal subunit protein uL29c (RPL29) from Zea mays (Maize).